Reading from the N-terminus, the 195-residue chain is Interferon omega-1 (195 aa).

The segment at residues 1 to 21 (MALLFPLLAALVMTSYSPVGS) is a signal peptide (or 23 in some molecules). Cystine bridges form between cysteine 24–cysteine 122 and cysteine 52–cysteine 162. Asparagine 101 carries an N-linked (GlcNAc...) asparagine glycan.

Belongs to the alpha/beta interferon family.

It is found in the secreted. This Homo sapiens (Human) protein is Interferon omega-1 (IFNW1).